Here is a 355-residue protein sequence, read N- to C-terminus: dTDP-D-glucose 4,6-dehydratase (355 aa).

Thr142 contacts substrate. The Proton donor role is filled by Asp143. Active-site proton acceptor residues include Glu144 and Tyr166.

It belongs to the NAD(P)-dependent epimerase/dehydratase family. dTDP-glucose dehydratase subfamily. Requires NAD(+) as cofactor.

The catalysed reaction is dTDP-alpha-D-glucose = dTDP-4-dehydro-6-deoxy-alpha-D-glucose + H2O. This chain is dTDP-D-glucose 4,6-dehydratase (TGDS), found in Bos taurus (Bovine).